The primary structure comprises 324 residues: Appendage-associated protein (324 aa).

A signal peptide spans Met-1–Ala-32. Residues Ile-195–Lys-255 adopt a coiled-coil conformation.

It is found in the secreted. Associates with actin filament appendages that are formed in the inclusion appendages of the parasitophorous vacuole during infection of the host erythrocyte. The sequence is that of Appendage-associated protein (aaaP1) from Anaplasma marginale (strain Florida).